We begin with the raw amino-acid sequence, 605 residues long: UvrABC system protein C (605 aa).

Residues 14 to 92 form the GIY-YIG domain; sequence QSCGVYKMVG…IKSLKPLYNI (79 aa). The UVR domain maps to 202–237; sequence KEVKEQLLFTMRKCSSEENYELAAIYRDRVKFLEQI.

The protein belongs to the UvrC family. In terms of assembly, interacts with UvrB in an incision complex.

It localises to the cytoplasm. The UvrABC repair system catalyzes the recognition and processing of DNA lesions. UvrC both incises the 5' and 3' sides of the lesion. The N-terminal half is responsible for the 3' incision and the C-terminal half is responsible for the 5' incision. The chain is UvrABC system protein C from Wolbachia pipientis wMel.